The following is a 301-amino-acid chain: MASRFRHAALVGKYQAPGSRQVLASVAEFLTNQGLEVSLDTTTAMAVGLPDYGALDAAQIGKHCDLAVVVGGDGTMLGTARQLARYGVPLIGINQGRLGFMTDIPMAEFRETIAPMIAGDYEEEHRTMLEGCVKRPSGDEFDVIYETFAVNDVVVSRGASAGMVELRVDVQDQFVANFRADGLIISSPTGSTAYALSAGGPILHPGISGWLMVPIAPHALSNRPIVLPDDSEVRIEIVAGRDASVNFDHQSLASLLHGDRICVRRSEHRVRVLHPRGWNFYATLRRKLHWNEGVLPDGAHS.

Residue Asp-73 is the Proton acceptor of the active site. Residues 73-74 (DG), 151-152 (ND), Arg-179, Asp-181, 192-197 (TAYALS), Ala-216, and Gln-250 each bind NAD(+).

This sequence belongs to the NAD kinase family. Requires a divalent metal cation as cofactor.

The protein resides in the cytoplasm. It catalyses the reaction NAD(+) + ATP = ADP + NADP(+) + H(+). Involved in the regulation of the intracellular balance of NAD and NADP, and is a key enzyme in the biosynthesis of NADP. Catalyzes specifically the phosphorylation on 2'-hydroxyl of the adenosine moiety of NAD to yield NADP. The protein is NAD kinase of Methylibium petroleiphilum (strain ATCC BAA-1232 / LMG 22953 / PM1).